A 424-amino-acid polypeptide reads, in one-letter code: D-inositol 3-phosphate glycosyltransferase (424 aa).

Residue H16 coordinates 1D-myo-inositol 3-phosphate. Residues 22 to 23 and G30 each bind UDP-N-acetyl-alpha-D-glucosamine; that span reads QP. Residues 27–32, K85, Y118, T142, and R162 each bind 1D-myo-inositol 3-phosphate; that span reads DAGGMN. Residues R240 and K245 each contribute to the UDP-N-acetyl-alpha-D-glucosamine site. The Mg(2+) site is built by M313, R314, and A316. UDP-N-acetyl-alpha-D-glucosamine is bound by residues E326 and E334. Residue T340 coordinates Mg(2+).

The protein belongs to the glycosyltransferase group 1 family. MshA subfamily. In terms of assembly, homodimer.

It carries out the reaction 1D-myo-inositol 3-phosphate + UDP-N-acetyl-alpha-D-glucosamine = 1D-myo-inositol 2-acetamido-2-deoxy-alpha-D-glucopyranoside 3-phosphate + UDP + H(+). In terms of biological role, catalyzes the transfer of a N-acetyl-glucosamine moiety to 1D-myo-inositol 3-phosphate to produce 1D-myo-inositol 2-acetamido-2-deoxy-glucopyranoside 3-phosphate in the mycothiol biosynthesis pathway. The protein is D-inositol 3-phosphate glycosyltransferase of Jonesia denitrificans (strain ATCC 14870 / DSM 20603 / BCRC 15368 / CIP 55.134 / JCM 11481 / NBRC 15587 / NCTC 10816 / Prevot 55134) (Listeria denitrificans).